The primary structure comprises 759 residues: Phosphoribosylformylglycinamidine synthase subunit PurL (759 aa).

The active site involves histidine 46. Residues tyrosine 49 and lysine 88 each contribute to the ATP site. Residue glutamate 90 coordinates Mg(2+). Substrate-binding positions include serine 91 to histidine 94 and arginine 113. Histidine 92 acts as the Proton acceptor in catalysis. A Mg(2+)-binding site is contributed by aspartate 114. Residue glutamine 237 participates in substrate binding. Aspartate 265 is a Mg(2+) binding site. Glutamate 309–glutamine 311 contacts substrate. Positions 498 and 535 each coordinate ATP. Asparagine 536 is a Mg(2+) binding site. Serine 538 is a substrate binding site.

This sequence belongs to the FGAMS family. Monomer. Part of the FGAM synthase complex composed of 1 PurL, 1 PurQ and 2 PurS subunits.

The protein localises to the cytoplasm. The catalysed reaction is N(2)-formyl-N(1)-(5-phospho-beta-D-ribosyl)glycinamide + L-glutamine + ATP + H2O = 2-formamido-N(1)-(5-O-phospho-beta-D-ribosyl)acetamidine + L-glutamate + ADP + phosphate + H(+). Its pathway is purine metabolism; IMP biosynthesis via de novo pathway; 5-amino-1-(5-phospho-D-ribosyl)imidazole from N(2)-formyl-N(1)-(5-phospho-D-ribosyl)glycinamide: step 1/2. In terms of biological role, part of the phosphoribosylformylglycinamidine synthase complex involved in the purines biosynthetic pathway. Catalyzes the ATP-dependent conversion of formylglycinamide ribonucleotide (FGAR) and glutamine to yield formylglycinamidine ribonucleotide (FGAM) and glutamate. The FGAM synthase complex is composed of three subunits. PurQ produces an ammonia molecule by converting glutamine to glutamate. PurL transfers the ammonia molecule to FGAR to form FGAM in an ATP-dependent manner. PurS interacts with PurQ and PurL and is thought to assist in the transfer of the ammonia molecule from PurQ to PurL. In Anaeromyxobacter dehalogenans (strain 2CP-1 / ATCC BAA-258), this protein is Phosphoribosylformylglycinamidine synthase subunit PurL.